Here is a 154-residue protein sequence, read N- to C-terminus: Lipoprotein signal peptidase (154 aa).

Helical transmembrane passes span 55 to 75 and 85 to 105; these read GQFWLFYLITVIVVAAIVIYI and AGVGLGLMLGGAIGNFLDRVF. Active-site residues include Asp-111 and Asp-129. Residues 127–147 traverse the membrane as a helical segment; it reads VADSALTVGVILLFVHMFFFA.

This sequence belongs to the peptidase A8 family.

It localises to the cell membrane. It carries out the reaction Release of signal peptides from bacterial membrane prolipoproteins. Hydrolyzes -Xaa-Yaa-Zaa-|-(S,diacylglyceryl)Cys-, in which Xaa is hydrophobic (preferably Leu), and Yaa (Ala or Ser) and Zaa (Gly or Ala) have small, neutral side chains.. Its pathway is protein modification; lipoprotein biosynthesis (signal peptide cleavage). Its function is as follows. This protein specifically catalyzes the removal of signal peptides from prolipoproteins. This Geobacillus kaustophilus (strain HTA426) protein is Lipoprotein signal peptidase.